Consider the following 254-residue polypeptide: MKNTKLLLAIATSAALLTGCQNTHGIDTNMAISSGLNAYKAATLSDADAKAIANQGCAEMDSGNQVASKSSKYGKRLAKIAKALGNNINGTPVNYKVYMTSDVNAWAMANGCVRVYSGLMDMMNDNEIEGVLGHELGHVALGHSLAEMKASYAIVAARDAISATSGVASQLSRSQLGDIAEGAINAKYSRDKESEADDFSFDLLKKRGISTQGLVGSFETLASLDGGRTQSMFDSHPPSTERAQHIRDRIASGK.

Residues 1–19 form the signal peptide; the sequence is MKNTKLLLAIATSAALLTG. A lipid anchor (N-palmitoyl cysteine) is attached at C20. The S-diacylglycerol cysteine moiety is linked to residue C20. Position 134 (H134) interacts with Zn(2+). The active site involves E135. Residues H138 and E193 each contribute to the Zn(2+) site. Residues 227–254 form a disordered region; the sequence is GRTQSMFDSHPPSTERAQHIRDRIASGK. A compositionally biased stretch (basic and acidic residues) spans 242-254; that stretch reads RAQHIRDRIASGK.

Belongs to the peptidase M48B family. Zn(2+) is required as a cofactor.

The protein localises to the cell inner membrane. Involved in the degradation of the LPS-assembly protein LptD. Degrades LptD that have engaged the Bam complex but are stalled at an early step in the outer membrane protein assembly process. The sequence is that of Metalloprotease YcaL (ycaL) from Escherichia coli (strain K12).